The sequence spans 269 residues: Probable membrane transporter protein YfcA (269 aa).

Over methionine 1–leucine 7 the chain is Periplasmic. Residues phenylalanine 8–isoleucine 28 form a helical membrane-spanning segment. At aspartate 29–serine 30 the chain is on the cytoplasmic side. The helical transmembrane segment at isoleucine 31–alanine 51 threads the bilayer. Topologically, residues asparagine 52–lysine 84 are periplasmic. Residues leucine 85 to glutamine 105 traverse the membrane as a helical segment. Residues alanine 106–glutamine 111 are Cytoplasmic-facing. Residues isoleucine 112 to glutamate 132 traverse the membrane as a helical segment. The Periplasmic segment spans residues glutamate 133–aspartate 156. A helical membrane pass occupies residues glycine 157–phenylalanine 177. Topologically, residues asparagine 178–glycine 197 are cytoplasmic. The helical transmembrane segment at leucine 198–glycine 218 threads the bilayer. Residues glutamine 219–asparagine 269 lie on the Periplasmic side of the membrane.

Belongs to the 4-toluene sulfonate uptake permease (TSUP) (TC 2.A.102) family.

It is found in the cell inner membrane. This is Probable membrane transporter protein YfcA (yfcA) from Escherichia coli O157:H7.